Consider the following 82-residue polypeptide: Small ribosomal subunit protein bS16c (82 aa).

This sequence belongs to the bacterial ribosomal protein bS16 family.

It is found in the plastid. The protein resides in the chloroplast. This chain is Small ribosomal subunit protein bS16c, found in Pyropia yezoensis (Susabi-nori).